We begin with the raw amino-acid sequence, 521 residues long: NAD(P)H-quinone oxidoreductase subunit 2 (521 aa).

14 helical membrane-spanning segments follow: residues 15–35 (ILPE…DITF), 42–62 (WTPY…YTQW), 79–99 (LSIV…LMSV), 109–126 (IGEF…AMFL), 131–153 (ELVM…TGYM), 167–187 (LLIG…LYGL), 208–228 (LALV…IAAV), 242–262 (PTPV…ALAI), 276–296 (WQFI…VVAI), 304–324 (MLAY…VIGT), 332–352 (VFYL…VILF), 376–396 (LALS…GFFG), 398–418 (LYLF…LGLI), and 464–484 (VGLV…NPLL).

The protein belongs to the complex I subunit 2 family. As to quaternary structure, NDH-1 can be composed of about 15 different subunits; different subcomplexes with different compositions have been identified which probably have different functions.

The protein localises to the cellular thylakoid membrane. The catalysed reaction is a plastoquinone + NADH + (n+1) H(+)(in) = a plastoquinol + NAD(+) + n H(+)(out). The enzyme catalyses a plastoquinone + NADPH + (n+1) H(+)(in) = a plastoquinol + NADP(+) + n H(+)(out). In terms of biological role, NDH-1 shuttles electrons from an unknown electron donor, via FMN and iron-sulfur (Fe-S) centers, to quinones in the respiratory and/or the photosynthetic chain. The immediate electron acceptor for the enzyme in this species is believed to be plastoquinone. Couples the redox reaction to proton translocation, and thus conserves the redox energy in a proton gradient. Cyanobacterial NDH-1 also plays a role in inorganic carbon-concentration. This chain is NAD(P)H-quinone oxidoreductase subunit 2, found in Acaryochloris marina (strain MBIC 11017).